Consider the following 112-residue polypeptide: Putative regulatory protein FmdB (112 aa).

Positions 52-68 (QRSAHERNEKSANEPRT) are enriched in basic and acidic residues. A disordered region spans residues 52-112 (QRSAHERNEK…KTARPWMVGH (61 aa)). The span at 74 to 102 (CGCTGSHTCKTKPPVNQDTGKPGLQMQTK) shows a compositional bias: polar residues.

The protein resides in the cytoplasm. In terms of biological role, may be a positive regulator of formamidase. The chain is Putative regulatory protein FmdB (fmdB) from Methylophilus methylotrophus (Bacterium W3A1).